The primary structure comprises 465 residues: Mothers against decapentaplegic homolog 1 (465 aa).

Residue Met1 is modified to N-acetylmethionine. An MH1 domain is found at 12–136 (PAVKRLLGWK…YKRVESPVLP (125 aa)). Positions 64, 109, 121, and 126 each coordinate Zn(2+). The segment at 162–246 (NEPHMPLNAT…DGSQPMDTNM (85 aa)) is disordered. Low complexity predominate over residues 179 to 212 (PNSHPFPHSPNSSYPNSPGGSSSTYPHSPTSSDP). A compositionally biased stretch (pro residues) spans 221–232 (DTPPPAYLPPED). The region spanning 271–465 (WCSIVYYELN…SPHNPISSVS (195 aa)) is the MH2 domain. Thr322 is modified (phosphothreonine; by MINK1, TNIK and MAP4K4). Positions 418 to 428 (KGWGAEYHRQD) are L3 loop. A phosphoserine mark is found at Ser463 and Ser465.

It belongs to the dwarfin/SMAD family. In terms of assembly, found in a complex with SMAD4 and YY1. Interacts with HGS, NANOG and ZCCHC12. Upon C-terminus phosphorylation: forms trimers with another SMAD1 and the co-SMAD SMAD4. Interacts with PEBP2-alpha subunit, CREB-binding protein (CBP), p300, SMURF1, SMURF2, USP15 and HOXC8. Associates with ZNF423 or ZNF521 in response to BMP2 leading to activate transcription of BMP target genes. Interacts with SKOR1. Interacts (via MH2 domain) with LEMD3. Binding to LEMD3 results in at least a partial reduction of receptor-mediated phosphorylation. Forms a ternary complex with PSMB4 and OAZ1 before PSMB4 is incorporated into the 20S proteasome. Interacts (via MH2 domain) with FAM83G (via MH2 domain); in a SMAD4-independent manner. Interacts with ZC3H3. Interacts with TMEM119. Interacts (via MH1 and MH2 domains) with ZNF8. Interacts with RANBP3L; the interaction increases when SMAD1 is not phosphorylated and mediates SMAD1 nuclear export. Interacts with EGR1; this interaction inhibits SMAD1 dephosphorylation. Interacts with SMAD6. Interacts with YAP1. Interacts with MTMR4; negatively regulates BMP signaling through SMAD1 dephosphorylation and retention in endosomes. Phosphorylation of the C-terminal SVS motif by BMP type 1 receptor kinase activates SMAD1 by promoting dissociation from the receptor and trimerization with SMAD4. Phosphorylation by ERK2 MAP kinase in response to EGF or HGF prevents SMAD1 nuclear accumulation and transcriptional activity in response to BMP. Dephosphorylation, probably by PPM1A, induces its export from the nucleus to the cytoplasm. Dephosphorylation is inhibited by association with EGR1. Phosphorylation by CDK8/9 creates binding sites for YAP1, and subsequent phosphorylation by GSK3 switches off YAP1 binding and adds binding sites for SMURF1. In terms of processing, ubiquitinated by SMAD-specific E3 ubiquitin ligase SMURF1, leading to its degradation. Monoubiquitinated, leading to prevent DNA-binding. Deubiquitination by USP15 alleviates inhibition and promotes activation of TGF-beta target genes. Dephosphorylation, probably by PPM1A, induces its export from the nucleus to the cytoplasm. Phospho-SMAD1 is ubiquitinated by CHIP leading to disruption of the SMAD1-SMAD4 complex. Ubiquitous.

The protein resides in the cytoplasm. Its subcellular location is the nucleus. In terms of biological role, transcriptional modulator that plays a role in various cellular processes, including embryonic development, cell differentiation, and tissue homeostasis. Upon BMP ligand binding to their receptors at the cell surface, is phosphorylated by activated type I BMP receptors (BMPRIs) and associates with SMAD4 to form a heteromeric complex which translocates into the nucleus acting as transcription factor. In turn, the hetero-trimeric complex recognizes cis-regulatory elements containing Smad Binding Elements (SBEs) to modulate the outcome of the signaling network. SMAD1/OAZ1/PSMB4 complex mediates the degradation of the CREBBP/EP300 repressor SNIP1. Positively regulates BMP4-induced expression of odontogenic development regulator MSX1 following IPO7-mediated nuclear import. The protein is Mothers against decapentaplegic homolog 1 (Smad1) of Mus musculus (Mouse).